The following is a 112-amino-acid chain: MEGMLNELNFKFKSENPVDVVLPKHHYGVVGSGDLEVLLKKHELEGAVEIRVVSPVRGFDHVWEKVLEKVISDAEVGNVAIEINDNNATPVVVALRLAQALSEAKSAEQSVN.

Ser32 carries the post-translational modification O-(phosphoribosyl dephospho-coenzyme A)serine.

It belongs to the MdcC family. Covalently binds the prosthetic group of malonate decarboxylase.

The protein localises to the cytoplasm. Subunit of malonate decarboxylase, it is an acyl carrier protein to which acetyl and malonyl thioester residues are bound via a 2'-(5''-phosphoribosyl)-3'-dephospho-CoA prosthetic group and turn over during the catalytic mechanism. The sequence is that of Malonate decarboxylase acyl carrier protein (mdcC) from Malonomonas rubra.